The chain runs to 555 residues: Urocanate hydratase (555 aa).

Residues 53–54 (GG), Q131, 177–179 (GMG), E197, R202, 243–244 (NA), 264–268 (QTSAH), 274–275 (YL), and Y323 each bind NAD(+). C411 is an active-site residue. Position 493 (G493) interacts with NAD(+).

Belongs to the urocanase family. NAD(+) serves as cofactor.

It is found in the cytoplasm. It catalyses the reaction 4-imidazolone-5-propanoate = trans-urocanate + H2O. The protein operates within amino-acid degradation; L-histidine degradation into L-glutamate; N-formimidoyl-L-glutamate from L-histidine: step 2/3. Catalyzes the conversion of urocanate to 4-imidazolone-5-propionate. The sequence is that of Urocanate hydratase from Maricaulis maris (strain MCS10) (Caulobacter maris).